The chain runs to 458 residues: RuvB-like protein 1 (458 aa).

73-80 (GPPGTGKT) lines the ATP pocket.

It belongs to the RuvB family. Interacts with FRI, and with FLX and FES1, two component of the transcription activator complex FRI-C. Interacts with the disease resistance genes RPM1 and RPP5.

The protein localises to the nucleus. It carries out the reaction ATP + H2O = ADP + phosphate + H(+). In terms of biological role, proposed core component of the chromatin remodeling INO80 complex which is involved in transcriptional regulation, DNA replication and probably DNA repair. Component of the NuA4 histone acetyltransferase complex which is involved in transcriptional activation of select genes principally by acetylation of nucleosomal histones H4 and H2A. Has single-stranded DNA-stimulated ATPase and ATP-dependent DNA helicase (3' to 5') activity suggesting a role in nuclear processes such as recombination and transcription. This chain is RuvB-like protein 1 (RIN1), found in Arabidopsis thaliana (Mouse-ear cress).